The chain runs to 1031 residues: LRR receptor-like serine/threonine-protein kinase EFR (1031 aa).

The signal sequence occupies residues 1 to 24; it reads MKLSFSLVFNALTLLLQVCIFAQA. Over 25–653 the chain is Extracellular; it reads RFSNETDMQA…LSVRKKVVSG (629 aa). N-linked (GlcNAc...) asparagine glycans are attached at residues N28, N55, and N95. LRR repeat units lie at residues 98–120, 122–144, 146–168, 170–193, 194–216, 218–240, 242–264, 267–289, 291–312, and 315–335; these read FLRL…VGRL, RLQY…LSNC, RLST…LGSL, KLAI…GNLT, SLQK…VARL, QMVF…LYNI, SLES…FGYL, NLRR…LANI, SLER…SFGK, and NLWW…SGLE. Residues N127 and N143 are each glycosylated (N-linked (GlcNAc...) asparagine). N180 and N191 each carry an N-linked (GlcNAc...) asparagine glycan. A glycan (N-linked (GlcNAc...) asparagine) is linked at N239. A glycan (N-linked (GlcNAc...) asparagine) is linked at N288. 4 N-linked (GlcNAc...) asparagine glycosylation sites follow: N323, N329, N342, and N366. LRR repeat units follow at residues 345-368, 370-392, 394-416, 418-440, 442-464, 466-487, 490-512, 514-536, 538-560, 561-584, and 585-597; these read QLEY…ANLS, TLTS…IGNL, SLQE…FGKL, NLQV…FGNM, RLQK…LGRC, YLLD…EILQ, SLAY…VGKL, LLVG…IGGC, SMEF…SRLV, SLKN…ASLP, and SLRN…NKFE. A glycan (N-linked (GlcNAc...) asparagine) is linked at N439. N-linked (GlcNAc...) asparagine glycosylation is present at N478. N-linked (GlcNAc...) asparagine glycosylation is found at N571, N590, and N608. Residues 654-674 form a helical membrane-spanning segment; the sequence is ICIGIASLLLIIIVASLCWFM. At 675–1031 the chain is on the cytoplasmic side; sequence KRKKKNNASD…WMLNTDMHTM (357 aa). T709 is modified (phosphothreonine). One can recognise a Protein kinase domain in the interval 712–1001; the sequence is FSSTNLIGSG…ELISIRSKFF (290 aa). Residues 718–726 and K741 each bind ATP; that span reads IGSGNFGNV. 2 positions are modified to phosphotyrosine: Y791 and Y836. D849 (proton acceptor) is an active-site residue. Phosphotyrosine is present on Y897. Residues 1005 to 1020 show a composition bias toward polar residues; that stretch reads TTITESPRDAPQSSPQ. Residues 1005-1031 form a disordered region; it reads TTITESPRDAPQSSPQEWMLNTDMHTM.

The protein belongs to the protein kinase superfamily. Ser/Thr protein kinase family. Binds to Pseudomonas syringae AvrPto1 and (via the kinase and cytoplasmic domains) to hopD2. Interacts with SERK3/BAK1, SERK4/BKK1, SERK1 and SERK2 in a specific ligand-induced manner. Binds to IOS1. Binds to BIK1 in the absence of pathogen elicitor; dissociates upon pathogen-associated molecular pattern (PAMP)-triggered activation. In terms of processing, autophosphorylated after elicitation with elfl18. Autophosphorylation is inhibited by the binding with avrPto1. Phosphorylation at T-836 is required for immune signaling. Post-translationally, polyubiquitinated at the kinase domain mediated by P.syringae AvrPtoB.

It is found in the cell membrane. It localises to the endomembrane system. The enzyme catalyses L-seryl-[protein] + ATP = O-phospho-L-seryl-[protein] + ADP + H(+). The catalysed reaction is L-threonyl-[protein] + ATP = O-phospho-L-threonyl-[protein] + ADP + H(+). Functionally, constitutes the pattern-recognition receptor (PPR) that determines the specific perception of elongation factor Tu (EF-Tu), a potent elicitor of the defense response to pathogen-associated molecular patterns (PAMPs); phosphorylates BIK1 upon elicitation to regulate immune responses such as defense hormone expression (e.g. jasmonic acid (JA) and salicylic acid (SA)). Reduces transformation by Rhizobium radiobacter probably by inducing plant defense during the interaction. Binding to the effector AvrPto1 from P.syringae blocks the downstream plant immune response while interaction with hopD2 decreases the phosphorylation level of EFR upon elf18 treatment. Specific endoplasmic reticulum quality control components (ERD2B, CRT3, UGGT and STT3A) are required for the biogenesis of EFR. The polypeptide is LRR receptor-like serine/threonine-protein kinase EFR (Arabidopsis thaliana (Mouse-ear cress)).